We begin with the raw amino-acid sequence, 493 residues long: GTPase Der (493 aa).

In terms of domain architecture, EngA-type G 1 spans 3–166; the sequence is PVIALVGRPN…EALGIFPKDN (164 aa). Residues 9 to 16, 56 to 60, and 118 to 121 contribute to the GTP site; these read GRPNVGKS, DTGGI, and NKVD. Acidic residues predominate over residues 167–184; it reads VEEEGEGEPASEEVAEGE. The disordered stretch occupies residues 167-195; that stretch reads VEEEGEGEPASEEVAEGEEPTRIPGPSEK. Residues 198-371 enclose the EngA-type G 2 domain; sequence IKIAIIGRPN…SVQESFRSAV (174 aa). Residues 204–211, 251–255, and 316–319 each bind GTP; these read GRPNVGKS, DTAGV, and NKWD. The region spanning 372–456 is the KH-like domain; the sequence is TRWPTSRLTS…PIRIEYKGGE (85 aa). The span at 454-463 shows a compositional bias: basic and acidic residues; that stretch reads GGENPYEGKK. The tract at residues 454–493 is disordered; sequence GGENPYEGKKNSLTARQVNKKRRLMSHHKKAEKKKKDKRR. A compositionally biased stretch (basic residues) spans 471-493; sequence VNKKRRLMSHHKKAEKKKKDKRR.

Belongs to the TRAFAC class TrmE-Era-EngA-EngB-Septin-like GTPase superfamily. EngA (Der) GTPase family. As to quaternary structure, associates with the 50S ribosomal subunit.

GTPase that plays an essential role in the late steps of ribosome biogenesis. The polypeptide is GTPase Der (Pseudomonas aeruginosa (strain LESB58)).